Consider the following 187-residue polypeptide: Elongation factor P (187 aa).

Residue K34 is modified to N6-(3,6-diaminohexanoyl)-5-hydroxylysine.

Belongs to the elongation factor P family. May be beta-lysylated on the epsilon-amino group of Lys-34 by the combined action of EpmA and EpmB, and then hydroxylated on the C5 position of the same residue by EpmC (if this protein is present). Lysylation is critical for the stimulatory effect of EF-P on peptide-bond formation. The lysylation moiety may extend toward the peptidyltransferase center and stabilize the terminal 3-CCA end of the tRNA. Hydroxylation of the C5 position on Lys-34 may allow additional potential stabilizing hydrogen-bond interactions with the P-tRNA.

It localises to the cytoplasm. Its pathway is protein biosynthesis; polypeptide chain elongation. Functionally, involved in peptide bond synthesis. Alleviates ribosome stalling that occurs when 3 or more consecutive Pro residues or the sequence PPG is present in a protein, possibly by augmenting the peptidyl transferase activity of the ribosome. Modification of Lys-34 is required for alleviation. The sequence is that of Elongation factor P from Thioalkalivibrio sulfidiphilus (strain HL-EbGR7).